The primary structure comprises 382 residues: Succinyl-diaminopimelate desuccinylase (382 aa).

H72 provides a ligand contact to Zn(2+). D74 is a catalytic residue. D105 is a Zn(2+) binding site. The active-site Proton acceptor is the E139. 3 residues coordinate Zn(2+): E140, E168, and H354.

It belongs to the peptidase M20A family. DapE subfamily. In terms of assembly, homodimer. Zn(2+) serves as cofactor. The cofactor is Co(2+).

It catalyses the reaction N-succinyl-(2S,6S)-2,6-diaminopimelate + H2O = (2S,6S)-2,6-diaminopimelate + succinate. It functions in the pathway amino-acid biosynthesis; L-lysine biosynthesis via DAP pathway; LL-2,6-diaminopimelate from (S)-tetrahydrodipicolinate (succinylase route): step 3/3. In terms of biological role, catalyzes the hydrolysis of N-succinyl-L,L-diaminopimelic acid (SDAP), forming succinate and LL-2,6-diaminopimelate (DAP), an intermediate involved in the bacterial biosynthesis of lysine and meso-diaminopimelic acid, an essential component of bacterial cell walls. The polypeptide is Succinyl-diaminopimelate desuccinylase (Shewanella amazonensis (strain ATCC BAA-1098 / SB2B)).